We begin with the raw amino-acid sequence, 833 residues long: Interleukin enhancer-binding factor 3 homolog (833 aa).

The DZF domain occupies 11–379 (RIFVNDDRHV…PMKRPIEEES (369 aa)). Disordered stretches follow at residues 65-86 (VNAL…GEQA) and 339-403 (DPLP…KAEP). The residue at position 70 (Thr70) is a Phosphothreonine. Basic and acidic residues predominate over residues 373–385 (RPIEEESTDEKNP). DRBM domains lie at 402–471 (EPAQ…DMGL) and 527–593 (HGKN…KLFP). Disordered regions lie at residues 597–651 (NSEV…FNQG), 702–762 (QSDS…GGGA), and 775–833 (AYPS…YQYR). The segment covering 629 to 639 (GRGRGRGRGRG) has biased composition (basic residues). Residues 640–651 (RGFNNGGGFNQG) are compositionally biased toward gly residues. Positions 775–818 (AYPSQVTGGQEYNYEGYSNQSNYNSQGGANQNFGGNSAPYNSGQ) are enriched in polar residues.

It is found in the nucleus. The protein localises to the nucleolus. The protein resides in the cytoplasm. Its function is as follows. RNA-binding protein that plays an essential role in the biogenesis of circular RNAs (circRNAs) which are produced by back-splicing circularization of pre-mRNAs. Within the nucleus, promotes circRNAs processing by stabilizing the regulatory elements residing in the flanking introns of the circularized exons. Plays thereby a role in the back-splicing of a subset of circRNAs. As a consequence, participates in a wide range of transcriptional and post-transcriptional processes. Binds to poly-U elements and AU-rich elements (AREs) in the 3'-UTR of target mRNAs. Upon viral infection, ILF3 accumulates in the cytoplasm and participates in the innate antiviral response. Mechanistically, ILF3 becomes phosphorylated and activated by the double-stranded RNA-activated protein kinase/PKR which releases ILF3 from cellular mature circRNAs. In turn, unbound ILF3 molecules are able to interact with and thus inhibit viral mRNAs. This chain is Interleukin enhancer-binding factor 3 homolog (ilf3), found in Danio rerio (Zebrafish).